The sequence spans 184 residues: Spiro-conjugate synthase (184 aa).

Cysteines 57 and 184 form a disulfide. Gln-115 is a binding site for (1S,3R,6R,8R,9R,11R,14S,15S,19R,20R)-8-ethyl-9,15-dihydroxy-3,4,6,20-tetramethyl-21,23-dioxo-24-azapentacyclo[20.2.1.0(1,6).0(11,20).0(14,19)]pentacosa-4,12,22(25)-trien-25-olate.

As to quaternary structure, homodimer.

The enzyme catalyses 4-[(1R,2R,4aS,5S,8aR)-2-[(2R,3R,5E,7E)-3-ethyl-2-hydroxy-5,7-dimethylnona-5,7-dien-1-yl]-5-hydroxy-1-methyl-1,2,4a,5,6,7,8,8a-octahydronaphthalene-1-carbonyl]-2-methylidene-5-oxo-2,5-dihydro-1H-pyrrol-3-olate = (1S,3R,6R,8R,9R,11R,14S,15S,19R,20R)-8-ethyl-9,15-dihydroxy-3,4,6,20-tetramethyl-21,23-dioxo-24-azapentacyclo[20.2.1.0(1,6).0(11,20).0(14,19)]pentacosa-4,12,22(25)-trien-25-olate. It participates in antibiotic biosynthesis. Its function is as follows. Involved in the biosynthesis of the spirotetramate antibiotics pyrroindomycins. Catalyzes the intramolecular cyclization forming the spiro-conjugate moiety in pyrroindomycins, via an exo-selective [4+2] cycloaddition reaction. In Streptomyces rugosporus, this protein is Spiro-conjugate synthase.